The following is an 891-amino-acid chain: Receptor-like protein 50 (891 aa).

Positions 1–22 (MITIIWSLCLIFCLSNSILVIA) are cleaved as a signal peptide. Topologically, residues 23-849 (KDLCLPDQRD…KEEKDKGLSW (827 aa)) are extracellular. N-linked (GlcNAc...) asparagine glycosylation is found at asparagine 62 and asparagine 98. LRR repeat units follow at residues 105-130 (QHLQSLDLSYNDLSCTLPDSSGNFKY), 132-152 (RVLNLLGCNLFGEIPTSLRSL), 153-176 (SYLTDLDLSYNDDLTGEILDSMGN), 177-201 (LKHLRVLSLTSCKFTGKIPSSLGNL), 203-225 (YLTDLDLSWNYFTGELPDSMGNL), 226-249 (KSLRVLNLHRCNFFGKIPTSLGSL), and 250-272 (SNLTDLDISKNEFTSEGPDSMSS). Residue asparagine 200 is glycosylated (N-linked (GlcNAc...) asparagine). Residues asparagine 251, asparagine 285, and asparagine 306 are each glycosylated (N-linked (GlcNAc...) asparagine). 4 LRR repeats span residues 286–309 (LSSLTNVDLSSNQFKAMLPSNMSS), 310–334 (LSKLEAFDISGNSFSGTIPSSLFML), 336–358 (SLIKLDLGTNDFSGPLKIGNISS), and 359–383 (PSNLQELYIGENNINGPIPRSILKL). An N-linked (GlcNAc...) asparagine glycan is attached at asparagine 355. The stretch at 384–407 (VGLSALSLSFWDTGGIVDFSIFLQ) is one LRR 12; degenerate repeat. LRR repeat units lie at residues 408 to 436 (LKSLRSLDLSGINLNISSSHHLPSHMMHL), 438 to 453 (LSSCNISQFPKFLENQ), 454 to 477 (TSLYHLDISANQIEGQVPEWLWRL), 478 to 504 (PTLRYVNIAQNAFSGELTMLPNPIYSF), 506 to 519 (ASDNKFSGEIPRAV), 520 to 544 (CEIGTLVLSNNNFSGSIPPCFEISN), 545 to 568 (KTLSILHLRNNSLSGVIPEESLHG), 570 to 591 (LRSLDVGSNRLSGQFPKSLINC), 593 to 614 (YLQFLNVEENRINDTFPSWLKS), 615 to 641 (LPNLQLLVLRSNEFHGPIFSPGDSLSF), 642 to 665 (SKLRFFDISENRFSGVLPSDYFVG), 712 to 736 (FEIYKTIDVSGNRLEGDIPESIGIL), 737 to 760 (KELIVLNMSNNAFTGHIPPSLSNL), 761 to 784 (SNLQSLDLSQNRLSGSIPGELGEL), and 786 to 809 (FLARMNFSYNMLEGPIPQGTQIQS). N-linked (GlcNAc...) asparagine glycosylation is found at asparagine 422, asparagine 442, and asparagine 452. Residues asparagine 531, asparagine 544, asparagine 554, asparagine 590, and asparagine 605 are each glycosylated (N-linked (GlcNAc...) asparagine). N-linked (GlcNAc...) asparagine glycans are attached at residues asparagine 743 and asparagine 759. N-linked (GlcNAc...) asparagine glycans are attached at residues asparagine 791 and asparagine 811. The helical transmembrane segment at 850–870 (VAAAIGYVPGLFCGLAIGHIL) threads the bilayer. Residues 871–891 (TSYKRDWFMRIFSCFSSPLKK) are Cytoplasmic-facing.

It belongs to the RLP family.

It localises to the cell membrane. This Arabidopsis thaliana (Mouse-ear cress) protein is Receptor-like protein 50.